We begin with the raw amino-acid sequence, 207 residues long: Outer-membrane lipoprotein LolB (207 aa).

The N-terminal stretch at 1 to 21 (MTLPDFRLIRLLPLASLVLTA) is a signal peptide. C22 is lipidated: N-palmitoyl cysteine. C22 carries S-diacylglycerol cysteine lipidation.

The protein belongs to the LolB family. Monomer.

It localises to the cell outer membrane. Functionally, plays a critical role in the incorporation of lipoproteins in the outer membrane after they are released by the LolA protein. The polypeptide is Outer-membrane lipoprotein LolB (Salmonella agona (strain SL483)).